A 72-amino-acid chain; its full sequence is Translation initiation factor IF-1 (72 aa).

An S1-like domain is found at 1-72 (MAKEDVIEIE…TRGRITYRFK (72 aa)).

This sequence belongs to the IF-1 family. As to quaternary structure, component of the 30S ribosomal translation pre-initiation complex which assembles on the 30S ribosome in the order IF-2 and IF-3, IF-1 and N-formylmethionyl-tRNA(fMet); mRNA recruitment can occur at any time during PIC assembly.

The protein localises to the cytoplasm. One of the essential components for the initiation of protein synthesis. Stabilizes the binding of IF-2 and IF-3 on the 30S subunit to which N-formylmethionyl-tRNA(fMet) subsequently binds. Helps modulate mRNA selection, yielding the 30S pre-initiation complex (PIC). Upon addition of the 50S ribosomal subunit IF-1, IF-2 and IF-3 are released leaving the mature 70S translation initiation complex. The chain is Translation initiation factor IF-1 from Streptococcus agalactiae serotype Ia (strain ATCC 27591 / A909 / CDC SS700).